The following is a 177-amino-acid chain: ATP synthase subunit delta (177 aa).

This sequence belongs to the ATPase delta chain family. In terms of assembly, F-type ATPases have 2 components, F(1) - the catalytic core - and F(0) - the membrane proton channel. F(1) has five subunits: alpha(3), beta(3), gamma(1), delta(1), epsilon(1). F(0) has three main subunits: a(1), b(2) and c(10-14). The alpha and beta chains form an alternating ring which encloses part of the gamma chain. F(1) is attached to F(0) by a central stalk formed by the gamma and epsilon chains, while a peripheral stalk is formed by the delta and b chains.

It localises to the cell inner membrane. Its function is as follows. F(1)F(0) ATP synthase produces ATP from ADP in the presence of a proton or sodium gradient. F-type ATPases consist of two structural domains, F(1) containing the extramembraneous catalytic core and F(0) containing the membrane proton channel, linked together by a central stalk and a peripheral stalk. During catalysis, ATP synthesis in the catalytic domain of F(1) is coupled via a rotary mechanism of the central stalk subunits to proton translocation. This protein is part of the stalk that links CF(0) to CF(1). It either transmits conformational changes from CF(0) to CF(1) or is implicated in proton conduction. The polypeptide is ATP synthase subunit delta (Shewanella amazonensis (strain ATCC BAA-1098 / SB2B)).